Here is a 745-residue protein sequence, read N- to C-terminus: Immunoglobulin superfamily containing leucine-rich repeat protein 2 (745 aa).

Residues 1-19 form the signal peptide; the sequence is MGPFGALCLAWALLGVVRA. In terms of domain architecture, LRRNT spans 20-51; sequence CPEPCACVDKYAHQFADCAYKELREVPEGLPA. Residues 20–589 lie on the Extracellular side of the membrane; the sequence is CPEPCACVDK…VFSTKKELPS (570 aa). 2 N-linked (GlcNAc...) asparagine glycosylation sites follow: asparagine 52 and asparagine 73. 5 LRR repeats span residues 52 to 73, 76 to 97, 100 to 123, 124 to 145, and 148 to 169; these read NVTT…AFVN, QVTS…ALAV, QLKN…RNLS, ALQL…ALGA, and DLRS…TFDA. Residue asparagine 121 is glycosylated (N-linked (GlcNAc...) asparagine). Positions 181–232 constitute an LRRCT domain; the sequence is NPFHCSCGLVWLQAWAASTRVSLPEPDSIACASPPELQGVPVHRLPALPCAP. An Ig-like domain is found at 233 to 372; sequence PSVRLSAEPP…GTNSTSLRVT (140 aa). Cysteines 260 and 356 form a disulfide. Over residues 290-300 the composition is skewed to basic and acidic residues; sequence KEEDGGDKVED. The interval 290–328 is disordered; that stretch reads KEEDGGDKVEDGEGDGDEDLPTQTEAPTPTPAPAWPAPP. Residues 317 to 328 are compositionally biased toward pro residues; it reads TPTPAPAWPAPP. 2 N-linked (GlcNAc...) asparagine glycosylation sites follow: asparagine 338 and asparagine 365. The disordered stretch occupies residues 376 to 423; the sequence is AGPPKHAPGTGEEPDAQVPTSERKATTKGRSNSVLPFKPEGKTKGQGL. 2 N-linked (GlcNAc...) asparagine glycosylation sites follow: asparagine 474 and asparagine 563. Residues 590-610 traverse the membrane as a helical segment; the sequence is LLVIVTVSVFLLVLATVPLLG. The Cytoplasmic segment spans residues 611-745; that stretch reads AACCHLLAKH…INGNYRQTAG (135 aa). Residues 654-697 are disordered; sequence SEKSYPARGEAGGEEPEEVPEEGLDEDVEQGDPSGDLQREESLA. Residues 665–683 show a composition bias toward acidic residues; the sequence is GGEEPEEVPEEGLDEDVEQ. Tyrosine 719 is subject to Phosphotyrosine. Serine 720 bears the Phosphoserine mark.

Homomultimer. Interacts with NTRK1/TrkA. In terms of tissue distribution, at 11.5 dpc, expressed in spinal nerves, their roots and the ventral spinal cord. At 12.5 dpc, detected in the ventral spinal cord, dorsal root ganglia (DRG), dorsal and ventral roots and sympathetic chain ganglia. At 12.5 dpc, expressed in almost all motor neurons which also express RET and in almost all DRG sensory neurons which also express NTRK1. At 18.5 dpc, expressed only in a subset of NTRK1-expressing neurons but still expressed in nearly all RET-expressing neurons.

The protein resides in the cell membrane. Functionally, required for axon extension during neural development. In Mus musculus (Mouse), this protein is Immunoglobulin superfamily containing leucine-rich repeat protein 2 (Islr2).